The primary structure comprises 200 residues: Tegument protein UL55 homolog (200 aa).

A compositionally biased stretch (basic and acidic residues) spans 1-20; sequence MLPANRAEHSSDAEPRDIGS. The tract at residues 1 to 23 is disordered; it reads MLPANRAEHSSDAEPRDIGSHGR.

Belongs to the alphaherpesvirinae HHV-1 UL55 family.

The protein localises to the virion tegument. The protein resides in the host nucleus matrix. The protein is Tegument protein UL55 homolog of Equine herpesvirus 1 (strain Ab4p) (EHV-1).